A 250-amino-acid polypeptide reads, in one-letter code: Virulence plasmid protein pGP6-D-related protein (250 aa).

This sequence belongs to the UPF0137 (pGP6-D) family.

This chain is Virulence plasmid protein pGP6-D-related protein, found in Chlamydia pneumoniae (Chlamydophila pneumoniae).